The chain runs to 440 residues: 3-phosphoshikimate 1-carboxyvinyltransferase (440 aa).

3 residues coordinate 3-phosphoshikimate: lysine 25, serine 26, and arginine 30. Phosphoenolpyruvate is bound at residue lysine 25. Residues glycine 96 and arginine 124 each coordinate phosphoenolpyruvate. Residues serine 168, glutamine 169, aspartate 310, and lysine 337 each contribute to the 3-phosphoshikimate site. Phosphoenolpyruvate is bound at residue glutamine 169. Aspartate 310 serves as the catalytic Proton acceptor. The phosphoenolpyruvate site is built by arginine 341, arginine 382, and lysine 409.

This sequence belongs to the EPSP synthase family. Monomer.

It localises to the cytoplasm. The enzyme catalyses 3-phosphoshikimate + phosphoenolpyruvate = 5-O-(1-carboxyvinyl)-3-phosphoshikimate + phosphate. It functions in the pathway metabolic intermediate biosynthesis; chorismate biosynthesis; chorismate from D-erythrose 4-phosphate and phosphoenolpyruvate: step 6/7. Functionally, catalyzes the transfer of the enolpyruvyl moiety of phosphoenolpyruvate (PEP) to the 5-hydroxyl of shikimate-3-phosphate (S3P) to produce enolpyruvyl shikimate-3-phosphate and inorganic phosphate. This chain is 3-phosphoshikimate 1-carboxyvinyltransferase, found in Chlamydia trachomatis serovar D (strain ATCC VR-885 / DSM 19411 / UW-3/Cx).